The sequence spans 596 residues: Probable tripeptidyl-peptidase SED2 (596 aa).

The first 16 residues, 1-16, serve as a signal peptide directing secretion; it reads MRLLKFVCLLASVAAA. Residues 17–203 constitute a propeptide, removed in mature form; sequence KPTPGASHKV…LESMSVEEFA (187 aa). The Peptidase S53 domain occupies 210–596; the sequence is LVTTACLREL…NFQALTKVLP (387 aa). An N-linked (GlcNAc...) asparagine glycan is attached at Asn265. Active-site charge relay system residues include Glu286 and Asp290. Asn403 is a glycosylation site (N-linked (GlcNAc...) asparagine). Ser501 (charge relay system) is an active-site residue. Residues Asp543 and Ile544 each contribute to the Ca(2+) site. The N-linked (GlcNAc...) asparagine glycan is linked to Asn572. Ca(2+) is bound by residues Gly576 and Asp578.

It depends on Ca(2+) as a cofactor.

The protein resides in the secreted. Its subcellular location is the extracellular space. It carries out the reaction Release of an N-terminal tripeptide from a polypeptide.. Its function is as follows. Secreted tripeptidyl-peptidase which degrades proteins at acidic pHs and is involved in virulence. This chain is Probable tripeptidyl-peptidase SED2 (SED2), found in Arthroderma benhamiae (strain ATCC MYA-4681 / CBS 112371) (Trichophyton mentagrophytes).